A 201-amino-acid polypeptide reads, in one-letter code: Adenylyl-sulfate kinase (201 aa).

35–42 serves as a coordination point for ATP; that stretch reads GLSGSGKS. Serine 109 functions as the Phosphoserine intermediate in the catalytic mechanism.

It belongs to the APS kinase family.

It carries out the reaction adenosine 5'-phosphosulfate + ATP = 3'-phosphoadenylyl sulfate + ADP + H(+). The protein operates within sulfur metabolism; hydrogen sulfide biosynthesis; sulfite from sulfate: step 2/3. Its function is as follows. Catalyzes the synthesis of activated sulfate. The protein is Adenylyl-sulfate kinase of Salmonella typhi.